The primary structure comprises 646 residues: Phosphomethylpyrimidine synthase (646 aa).

Substrate-binding positions include N235, M264, Y293, H329, 349 to 351 (SRG), 390 to 393 (DGLR), and E429. A Zn(2+)-binding site is contributed by H433. Residue Y456 coordinates substrate. Position 497 (H497) interacts with Zn(2+). Residues C577, C580, and C585 each contribute to the [4Fe-4S] cluster site.

The protein belongs to the ThiC family. In terms of assembly, homodimer. It depends on [4Fe-4S] cluster as a cofactor.

It catalyses the reaction 5-amino-1-(5-phospho-beta-D-ribosyl)imidazole + S-adenosyl-L-methionine = 4-amino-2-methyl-5-(phosphooxymethyl)pyrimidine + CO + 5'-deoxyadenosine + formate + L-methionine + 3 H(+). The protein operates within cofactor biosynthesis; thiamine diphosphate biosynthesis. Catalyzes the synthesis of the hydroxymethylpyrimidine phosphate (HMP-P) moiety of thiamine from aminoimidazole ribotide (AIR) in a radical S-adenosyl-L-methionine (SAM)-dependent reaction. This is Phosphomethylpyrimidine synthase from Vibrio campbellii (strain ATCC BAA-1116).